Here is a 312-residue protein sequence, read N- to C-terminus: Aquaglyceroporin-2 (312 aa).

Transmembrane regions (helical) follow at residues Phe-78 to Val-98, Leu-104 to Ile-124, Tyr-151 to Ala-171, Gly-203 to Cys-223, Val-239 to Ala-259, and Tyr-286 to Tyr-306.

Belongs to the MIP/aquaporin (TC 1.A.8) family.

It is found in the membrane. It catalyses the reaction glycerol(in) = glycerol(out). It carries out the reaction H2O(in) = H2O(out). The catalysed reaction is urea(in) = urea(out). Mediates water and glycerol transport across cell membranes. Permeable to urea. Permeable to methylamine/methylammonium. Permeable to dihydroxyacetone. This Trypanosoma brucei brucei protein is Aquaglyceroporin-2.